The sequence spans 493 residues: CBL-interacting protein kinase 26 (493 aa).

One can recognise a Protein kinase domain in the interval 12-266 (YEIGRQLGQG…IPKIKRSAWY (255 aa)). ATP is bound by residues 18–26 (LGQGNFAKV) and lysine 41. Residue aspartate 134 is the Proton acceptor of the active site. The interval 152–181 (DFGLSALSESKRHDGLLHTTCGTPAYVAPE) is activation loop. The disordered stretch occupies residues 311-332 (KVYTNGEATTSDSPECSNSDGK). Residues 316 to 332 (GEATTSDSPECSNSDGK) are compositionally biased toward polar residues. Residues 320–360 (TSDSPECSNSDGKQASLSLPNLNAFDIISLSTGFDLSNLFE) enclose the NAF domain. The PPI stretch occupies residues 365 to 394 (RREERFTTRQPAAAIFAKLNELARRFKLKI). Positions 465 to 493 (GQHQQPEQSMQGMQGEQQPSRLPSQQPQG) are disordered.

This sequence belongs to the protein kinase superfamily. CAMK Ser/Thr protein kinase family. SNF1 subfamily. Mn(2+) serves as cofactor.

It catalyses the reaction L-seryl-[protein] + ATP = O-phospho-L-seryl-[protein] + ADP + H(+). It carries out the reaction L-threonyl-[protein] + ATP = O-phospho-L-threonyl-[protein] + ADP + H(+). In terms of biological role, CIPK serine-threonine protein kinases interact with CBL proteins. Binding of a CBL protein to the regulatory NAF domain of CIPK protein lead to the activation of the kinase in a calcium-dependent manner. In Oryza sativa subsp. japonica (Rice), this protein is CBL-interacting protein kinase 26 (CIPK26).